We begin with the raw amino-acid sequence, 673 residues long: Clotting factor G alpha subunit (673 aa).

Positions 1 to 19 (MLVLLCCVVLHVGVARICC) are cleaved as a signal peptide. The GH16 domain maps to 27-257 (LVWSDEFTNG…YVRVYQDAST (231 aa)). The active-site Nucleophile is the E137. E142 acts as the Proton donor in catalysis. N186 is a glycosylation site (N-linked (GlcNAc...) asparagine). The Ricin B-type lectin domain maps to 266-404 (LDGYYFVQNR…NQLSGQWKLI (139 aa)). 2 consecutive CBM6 domains span residues 411–533 (KLIQ…IKIT) and 549–671 (KLIQ…IRIT).

It belongs to the glycosyl hydrolase 16 family. As to quaternary structure, clotting factor G is a heterodimer composed of two non-covalently associated subunits, alpha and beta. Post-translationally, in presence of (1-&gt;3)-beta-glucan, proteolytically cleaved into a 55kDa and a 17kDa forms. As to expression, expressed in hemocytes (at protein level).

Component of the heterodimer clotting factor G which may play a role in defense mechanisms against fungi. Initiates a (1-&gt;3)-beta-glucan-sensing clotting pathway whereby the alpha subunit binds to glucans containing (1-&gt;3)-beta linkages, which are components of the fungal cell wall, and the beta subunit catalyzes the activation of proclotting enzyme. The chain is Clotting factor G alpha subunit from Tachypleus tridentatus (Japanese horseshoe crab).